A 1097-amino-acid chain; its full sequence is Protein kinase C-like 1 (1097 aa).

REM-1 domains lie at 2 to 76 and 106 to 183; these read STSQ…QMQR and KYEC…FSIN. The C2 domain occupies 189–311; the sequence is RDYEIMDSTK…AKDQGSSGWL (123 aa). The segment at 304–359 is disordered; it reads DQGSSGWLPAANLPQTGGSGAGTGSSMTGGASYGATSPLPAHNDLRPSVSPSSDAK. The segment covering 327–340 has biased composition (low complexity); it reads GSSMTGGASYGATS. 2 consecutive Phorbol-ester/DAG-type zinc fingers follow at residues 415–462 and 480–530; these read GHQF…VTKC and PHRF…PDFC. 3 disordered regions span residues 548–594, 615–646, and 724–763; these read KVSP…LRPA, YQEP…LSFE, and ETSH…RRKR. Positions 574–583 are enriched in basic and acidic residues; sequence PSMDSEETLH. Residues 730–741 are compositionally biased toward low complexity; the sequence is QQNQQVQQVQQQ. The segment covering 747-763 has biased composition (basic residues); it reads QRTHSSGKSGKSKRRKR. Positions 770–1029 constitute a Protein kinase domain; the sequence is FQFLAVLGKG…AEEIMEHPYF (260 aa). Residues 776-784 and Lys-799 contribute to the ATP site; that span reads LGKGNFGKV. Asp-895 (proton acceptor) is an active-site residue. The region spanning 1030–1097 is the AGC-kinase C-terminal domain; the sequence is HDVNFDDVLN…FSHISDNATI (68 aa).

The protein belongs to the protein kinase superfamily. AGC Ser/Thr protein kinase family. PKC subfamily.

The catalysed reaction is L-seryl-[protein] + ATP = O-phospho-L-seryl-[protein] + ADP + H(+). The enzyme catalyses L-threonyl-[protein] + ATP = O-phospho-L-threonyl-[protein] + ADP + H(+). Necessary for osmotic stability. In Candida albicans (Yeast), this protein is Protein kinase C-like 1 (PKC1).